The chain runs to 182 residues: Ribulose bisphosphate carboxylase small subunit, chloroplastic (182 aa).

Residues 1 to 58 (MASSMISSATIATVNCSSPAQANMVAPFTGLKSASAFPVTRKANNDITSLASNGGRVQ) constitute a chloroplast transit peptide.

It belongs to the RuBisCO small chain family. As to quaternary structure, heterohexadecamer of 8 large and 8 small subunits.

Its subcellular location is the plastid. The protein resides in the chloroplast. Its function is as follows. RuBisCO catalyzes two reactions: the carboxylation of D-ribulose 1,5-bisphosphate, the primary event in carbon dioxide fixation, as well as the oxidative fragmentation of the pentose substrate. Both reactions occur simultaneously and in competition at the same active site. Although the small subunit is not catalytic it is essential for maximal activity. The sequence is that of Ribulose bisphosphate carboxylase small subunit, chloroplastic from Gossypium hirsutum (Upland cotton).